A 132-amino-acid chain; its full sequence is MVMTDPIADFLTRIRNANQANHEVLEVPASNIKKGIAEILKREGFVKNVEFIEDDKQGIIRVFLKYGQNGEKVITGLKRVSKPGLRVYKKREDLPKVLNGLGIAILSTSEGLLTDKEARQKNVGGEVIAYVW.

It belongs to the universal ribosomal protein uS8 family. Part of the 30S ribosomal subunit. Contacts proteins S5 and S12.

Its function is as follows. One of the primary rRNA binding proteins, it binds directly to 16S rRNA central domain where it helps coordinate assembly of the platform of the 30S subunit. This is Small ribosomal subunit protein uS8 from Streptococcus gordonii (strain Challis / ATCC 35105 / BCRC 15272 / CH1 / DL1 / V288).